The following is a 77-amino-acid chain: Protein KleA (77 aa).

This sequence to E.coli KleC (kcrB1).

The polypeptide is Protein KleA (kleA) (Escherichia coli).